The sequence spans 262 residues: Phosphonates import ATP-binding protein PhnC (262 aa).

The 249-residue stretch at 5–253 (IRVEKLAKTF…RFDHLYRSIN (249 aa)) folds into the ABC transporter domain. 37-44 (GPSGSGKS) contacts ATP.

The protein belongs to the ABC transporter superfamily. Phosphonates importer (TC 3.A.1.9.1) family. The complex is composed of two ATP-binding proteins (PhnC), two transmembrane proteins (PhnE) and a solute-binding protein (PhnD).

The protein resides in the cell inner membrane. It catalyses the reaction phosphonate(out) + ATP + H2O = phosphonate(in) + ADP + phosphate + H(+). Part of the ABC transporter complex PhnCDE involved in phosphonates import. Responsible for energy coupling to the transport system. This chain is Phosphonates import ATP-binding protein PhnC, found in Shigella flexneri serotype 5b (strain 8401).